The following is a 236-amino-acid chain: ATP synthase subunit a (236 aa).

5 consecutive transmembrane segments (helical) span residues 17–37 (LSDM…AVAA), 75–95 (FLTL…LGLP), 112–132 (DATV…YYGV), 174–194 (IYAG…YGVL), and 208–228 (FSIF…MVYM).

This sequence belongs to the ATPase A chain family. In terms of assembly, F-type ATPases have 2 components, CF(1) - the catalytic core - and CF(0) - the membrane proton channel. CF(1) has five subunits: alpha(3), beta(3), gamma(1), delta(1), epsilon(1). CF(0) has three main subunits: a(1), b(2) and c(9-12). The alpha and beta chains form an alternating ring which encloses part of the gamma chain. CF(1) is attached to CF(0) by a central stalk formed by the gamma and epsilon chains, while a peripheral stalk is formed by the delta and b chains.

It is found in the cell membrane. Functionally, key component of the proton channel; it plays a direct role in the translocation of protons across the membrane. This chain is ATP synthase subunit a, found in Geobacillus stearothermophilus (Bacillus stearothermophilus).